A 122-amino-acid polypeptide reads, in one-letter code: Large ribosomal subunit protein uL14 (122 aa).

This sequence belongs to the universal ribosomal protein uL14 family. In terms of assembly, part of the 50S ribosomal subunit. Forms a cluster with proteins L3 and L19. In the 70S ribosome, L14 and L19 interact and together make contacts with the 16S rRNA in bridges B5 and B8.

Binds to 23S rRNA. Forms part of two intersubunit bridges in the 70S ribosome. The protein is Large ribosomal subunit protein uL14 of Shewanella frigidimarina (strain NCIMB 400).